The chain runs to 149 residues: MSLKLHNLKPTPNSRPEKHRKGRGHAAGKGKQAGKGQSGQNKRKGHRLGFEGGQTPWFRRIGKRGFKNVNHVEYQVVNLSSLEERYSNNETVTLESLFERNLIRRSVELRPVKVLAKGKLTKKLTLQVHSVSQAAREAVEKAGGKVEEL.

Positions 1–54 are disordered; sequence MSLKLHNLKPTPNSRPEKHRKGRGHAAGKGKQAGKGQSGQNKRKGHRLGFEGGQ. The span at 17 to 28 shows a compositional bias: basic residues; the sequence is EKHRKGRGHAAG.

The protein belongs to the universal ribosomal protein uL15 family. As to quaternary structure, part of the 50S ribosomal subunit.

Functionally, binds to the 23S rRNA. The protein is Large ribosomal subunit protein uL15 of Mycoplasmopsis synoviae (strain 53) (Mycoplasma synoviae).